A 138-amino-acid polypeptide reads, in one-letter code: Cysteine desulfuration protein SufE (138 aa).

The active-site Cysteine persulfide intermediate is the Cys-51.

This sequence belongs to the SufE family. As to quaternary structure, homodimer. Interacts with SufS.

Its subcellular location is the cytoplasm. The protein operates within cofactor biosynthesis; iron-sulfur cluster biosynthesis. Functionally, participates in cysteine desulfuration mediated by SufS. Cysteine desulfuration mobilizes sulfur from L-cysteine to yield L-alanine and constitutes an essential step in sulfur metabolism for biosynthesis of a variety of sulfur-containing biomolecules. Functions as a sulfur acceptor for SufS, by mediating the direct transfer of the sulfur atom from the S-sulfanylcysteine of SufS, an intermediate product of cysteine desulfuration process. In Citrobacter koseri (strain ATCC BAA-895 / CDC 4225-83 / SGSC4696), this protein is Cysteine desulfuration protein SufE.